Consider the following 439-residue polypeptide: 3-phosphoshikimate 1-carboxyvinyltransferase (439 aa).

Residues Lys29 and Arg34 each contribute to the 3-phosphoshikimate site. Lys29 contributes to the phosphoenolpyruvate binding site. Positions 99 and 128 each coordinate phosphoenolpyruvate. 6 residues coordinate 3-phosphoshikimate: Ser171, Ser172, Gln173, Ser199, Asp316, and Lys343. Position 173 (Gln173) interacts with phosphoenolpyruvate. The active-site Proton acceptor is Asp316. Phosphoenolpyruvate contacts are provided by Arg347, Arg390, and Lys416.

The protein belongs to the EPSP synthase family. As to quaternary structure, monomer.

The protein resides in the cytoplasm. The catalysed reaction is 3-phosphoshikimate + phosphoenolpyruvate = 5-O-(1-carboxyvinyl)-3-phosphoshikimate + phosphate. It functions in the pathway metabolic intermediate biosynthesis; chorismate biosynthesis; chorismate from D-erythrose 4-phosphate and phosphoenolpyruvate: step 6/7. In terms of biological role, catalyzes the transfer of the enolpyruvyl moiety of phosphoenolpyruvate (PEP) to the 5-hydroxyl of shikimate-3-phosphate (S3P) to produce enolpyruvyl shikimate-3-phosphate and inorganic phosphate. The protein is 3-phosphoshikimate 1-carboxyvinyltransferase of Deinococcus radiodurans (strain ATCC 13939 / DSM 20539 / JCM 16871 / CCUG 27074 / LMG 4051 / NBRC 15346 / NCIMB 9279 / VKM B-1422 / R1).